Here is a 273-residue protein sequence, read N- to C-terminus: NADPH-dependent 7-cyano-7-deazaguanine reductase (273 aa).

81-83 (VES) provides a ligand contact to substrate. 83-84 (SK) provides a ligand contact to NADPH. Cys179 functions as the Thioimide intermediate in the catalytic mechanism. Asp186 (proton donor) is an active-site residue. Residue 218–219 (AE) participates in substrate binding. 247–248 (RG) serves as a coordination point for NADPH.

This sequence belongs to the GTP cyclohydrolase I family. QueF type 2 subfamily. In terms of assembly, homodimer.

It localises to the cytoplasm. The catalysed reaction is 7-aminomethyl-7-carbaguanine + 2 NADP(+) = 7-cyano-7-deazaguanine + 2 NADPH + 3 H(+). It functions in the pathway tRNA modification; tRNA-queuosine biosynthesis. Catalyzes the NADPH-dependent reduction of 7-cyano-7-deazaguanine (preQ0) to 7-aminomethyl-7-deazaguanine (preQ1). The sequence is that of NADPH-dependent 7-cyano-7-deazaguanine reductase from Rickettsia canadensis (strain McKiel).